The chain runs to 5112 residues: Malformin synthetase mlfA (5112 aa).

Positions 225–616 (ERHAANRPHS…CGRADTQVKL (392 aa)) are adenylation 1. In terms of domain architecture, Carrier 1 spans 757–830 (SRLEQEIQLA…EAASLAEVQE (74 aa)). Ser791 is subject to O-(pantetheine 4'-phosphoryl)serine. The tract at residues 868–1299 (EDVFPCTTMQ…ALDSLTLLQA (432 aa)) is condensation 1. Residues 1327–1716 (DRRVTRQPDT…GRKDTQVKLR (390 aa)) are adenylation 2. Residues 1854 to 1931 (TAASELERTL…QLAAELGESP (78 aa)) form the Carrier 2 domain. The residue at position 1891 (Ser1891) is an O-(pantetheine 4'-phosphoryl)serine. Disordered stretches follow at residues 1926–1961 (ELGE…DGVD) and 1994–2034 (GGSS…VPEP). Low complexity-rich tracts occupy residues 1930–1941 (SPRSSTSSASSS) and 1994–2012 (GGSS…SSSS). Residues 2064-2479 (EDIYPATALQ…AVSYSDKQTL (416 aa)) form a condensation 2 region. The segment at 2502–2894 (IRTPHAPAVC…IGRRDGQVKL (393 aa)) is adenylation 3. Positions 3030–3106 (RPTTAKECEM…QLLFHLRNAK (77 aa)) constitute a Carrier 3 domain. Residue Ser3067 is modified to O-(pantetheine 4'-phosphoryl)serine. Condensation stretches follow at residues 3122-3586 (WVDL…TYEQ) and 3607-4044 (NIYP…EQLV). The adenylation 4 stretch occupies residues 4069 to 4459 (HSSRQAVCAW…VGRKDNQIKF (391 aa)). The Carrier 4 domain occupies 4593-4669 (MPSTEAECIM…DLARHNSLVQ (77 aa)). An O-(pantetheine 4'-phosphoryl)serine modification is found at Ser4630. The segment at 4724–5106 (IVVDIPGRIS…VEKVVALLRD (383 aa)) is condensation 5.

It belongs to the NRP synthetase family.

It functions in the pathway secondary metabolite biosynthesis. Nonribosomal peptide synthetase; part of the gene cluster that mediates the biosynthesis of malformins, cyclic pentapeptides with a disulfide bond between 2 consecutive cysteins, that show potential anti-tumor as well as antimalarial and antitrypanosomal properties. The nonribosomal peptide synthetase mlfA is responsible of the formation of the cyclic pentapeptide. MlfA probably acts iteratively on one amino acid and possesses multiple amino acid specificities since it is involved in the biosynthesis of multiple malformins, including malformin C and malformin A2. Malformin C corresponds to a cyclo[D-Cys-D-Cys-Val-D-Leu-Val] pentapeptide whereas malformin A2 corresponds to a cyclo[D-Cys-D-Cys-Val-D-Leu-Ile] pentapeptide. The malformin biosynthesis clusters in malformin-producing fungi also contain enzymes involved in the formation of the disulfide bond between the two consecutive cysteins within malformins, in addition to additional tailoring enzymes such as methyltransferases or oxidoreductases. They are also composed of up to 4 major facilitator superfamily transporters, and transcription factors probably involved in the regulation of the expression of those clusters. The protein is Malformin synthetase mlfA of Aspergillus brasiliensis (strain CBS 101740 / IMI 381727 / IBT 21946).